The following is a 422-amino-acid chain: m7GpppN-mRNA hydrolase (422 aa).

Positions 95 to 226 (MGVPTYGAII…KLGLAPNKFF (132 aa)) constitute a Nudix hydrolase domain. The Nudix box motif lies at 129–150 (GKVNKEEAPHDCAAREVFEETG). The Mn(2+) site is built by Glu-144 and Glu-148. 5 positions are modified to phosphoserine: Ser-246, Ser-247, Ser-249, Ser-276, and Ser-284. The tract at residues 247-347 (SDSDNGFSSA…GVHGQPAKQQ (101 aa)) is disordered. Residues 249–258 (SDNGFSSAGS) show a composition bias toward low complexity. Residues 303-312 (NHGEVSDLLK) are compositionally biased toward basic and acidic residues.

Belongs to the Nudix hydrolase family. DCP2 subfamily. In terms of assembly, found in a mRNA decay complex with LSM1, LSM3, LSM4, EXOSC2, EXOSC4, EXOSC10, PARN, XRN1, CNOT6, UPF1, UPF2 and UPF3B. Forms a complex with DCP1A, EDC3, DDX6 and EDC4/HEDLS, within this complex directly interacts with EDC4/HEDLS. Interacts with DPC1B, UPF1, UPF2 and UPF3B. Associates with polysomes. Interacts (via N-terminus and C-terminus) with TRIM21 (via N-terminus and C-terminus). Interacts with LIMD1, WTIP and AJUBA. Interacts with DDX17 in an RNA-dependent manner. Interacts with ZC3HAV1. Interacts with APOBEC3G in an RNA-dependent manner. Interacts with ZFP36L1 (via N-terminus). Interacts with NBDY. It depends on Mn(2+) as a cofactor. Mg(2+) is required as a cofactor. In terms of tissue distribution, strongly expressed in brain and testis. Weakly expressed in lung. Not detected in heart, liver, kidney and muscle (at protein level).

The protein localises to the cytoplasm. Its subcellular location is the P-body. It localises to the nucleus. The catalysed reaction is a 5'-end (N(7)-methyl 5'-triphosphoguanosine)-ribonucleoside in mRNA + H2O = N(7)-methyl-GDP + a 5'-end phospho-ribonucleoside in mRNA + 2 H(+). Functionally, decapping metalloenzyme that catalyzes the cleavage of the cap structure on mRNAs. Removes the 7-methyl guanine cap structure from mRNA molecules, yielding a 5'-phosphorylated mRNA fragment and 7m-GDP. Necessary for the degradation of mRNAs, both in normal mRNA turnover and in nonsense-mediated mRNA decay. Plays a role in replication-dependent histone mRNA degradation. Has higher activity towards mRNAs that lack a poly(A) tail. Has no activity towards a cap structure lacking an RNA moiety. The presence of a N(6)-methyladenosine methylation at the second transcribed position of mRNAs (N(6),2'-O-dimethyladenosine cap; m6A(m)) provides resistance to DCP2-mediated decapping. Blocks autophagy in nutrient-rich conditions by repressing the expression of ATG-related genes through degradation of their transcripts. The polypeptide is m7GpppN-mRNA hydrolase (Dcp2) (Mus musculus (Mouse)).